The following is a 243-amino-acid chain: UPF0246 protein spyM18_2163 (243 aa).

The protein belongs to the UPF0246 family.

The protein is UPF0246 protein spyM18_2163 of Streptococcus pyogenes serotype M18 (strain MGAS8232).